The following is a 349-amino-acid chain: Heat-inducible transcription repressor HrcA (349 aa).

This sequence belongs to the HrcA family.

Its function is as follows. Negative regulator of class I heat shock genes (grpE-dnaK-dnaJ and groELS operons). Prevents heat-shock induction of these operons. This Xylella fastidiosa (strain 9a5c) protein is Heat-inducible transcription repressor HrcA.